Consider the following 387-residue polypeptide: Mannitol-1-phosphate 5-dehydrogenase (387 aa).

3–14 (ALHFGAGNIGRG) provides a ligand contact to NAD(+).

This sequence belongs to the mannitol dehydrogenase family.

It carries out the reaction D-mannitol 1-phosphate + NAD(+) = beta-D-fructose 6-phosphate + NADH + H(+). The protein is Mannitol-1-phosphate 5-dehydrogenase of Yersinia pseudotuberculosis serotype O:1b (strain IP 31758).